The following is a 225-amino-acid chain: Ribonuclease 3 (225 aa).

An RNase III domain is found at 7–129 (IPRLCRTLGY…IIGAIYLDSE (123 aa)). Position 42 (E42) interacts with Mg(2+). D46 is an active-site residue. Mg(2+)-binding residues include D115 and E118. Residue E118 is part of the active site. Positions 155–225 (DPKTLLQEHL…AAQVLELMKK (71 aa)) constitute a DRBM domain.

Belongs to the ribonuclease III family. Homodimer. It depends on Mg(2+) as a cofactor.

Its subcellular location is the cytoplasm. It carries out the reaction Endonucleolytic cleavage to 5'-phosphomonoester.. Its function is as follows. Digests double-stranded RNA. Involved in the processing of primary rRNA transcript to yield the immediate precursors to the large and small rRNAs (23S and 16S). Processes some mRNAs, and tRNAs when they are encoded in the rRNA operon. Processes pre-crRNA and tracrRNA of type II CRISPR loci if present in the organism. In Shewanella halifaxensis (strain HAW-EB4), this protein is Ribonuclease 3.